A 64-amino-acid chain; its full sequence is Large ribosomal subunit protein bL35 (64 aa).

The protein belongs to the bacterial ribosomal protein bL35 family.

The chain is Large ribosomal subunit protein bL35 from Leifsonia xyli subsp. xyli (strain CTCB07).